The following is a 526-amino-acid chain: Methyltetrahydroprotoberberine 14-monooxygenase (526 aa).

The helical transmembrane segment at 14–34 (LLLQYLQPISVALVVIALVWN) threads the bilayer. Position 468 (Cys-468) interacts with heme.

This sequence belongs to the cytochrome P450 family. The cofactor is heme. As to expression, mainly expressed in roots, and barely in stems, leaves and carpels.

The protein resides in the membrane. The enzyme catalyses (S)-cis-N-methylcanadine + reduced [NADPH--hemoprotein reductase] + O2 = allocryptopine + oxidized [NADPH--hemoprotein reductase] + H2O + 2 H(+). The catalysed reaction is (S)-cis-N-methylstylopine + reduced [NADPH--hemoprotein reductase] + O2 = protopine + oxidized [NADPH--hemoprotein reductase] + H2O + 2 H(+). It catalyses the reaction (S)-cis-N-methyltetrahydrothalifendine + reduced [NADPH--hemoprotein reductase] + O2 = 7-hydroxy-8-methoxy-11-methyl-17,19-dioxa-11-azatetracyclo[12.7.0.0(4,9).0(16,20)]henicosa-1(21),4(9),5,7,14,16(20)-hexaen-2-one + oxidized [NADPH--hemoprotein reductase] + H2O + 2 H(+). It carries out the reaction (S)-cis-N-methyltetrahydropalmatine + reduced [NADPH--hemoprotein reductase] + O2 = muramine + oxidized [NADPH--hemoprotein reductase] + H2O + 2 H(+). It functions in the pathway alkaloid biosynthesis. Its activity is regulated as follows. Repressed by cytochrome P450 inhibitors ketoconazole, metyrapone, prochloraz, ancymidol and cytochrome C. Its function is as follows. Involved in the biosynthesis of the isoquinoline alkaloid sanguinarine. Catalyzes the conversion of N-methylated protoberberine alkaloids N-methylstylopine and N-methylcanadine into protopine and allocryptopine, respectively. Can also use (S)-cis-N-methyltetrahydrothalifendine and (S)-cis-N-methyltetrahydropalmatine as substrates. This chain is Methyltetrahydroprotoberberine 14-monooxygenase, found in Papaver somniferum (Opium poppy).